A 362-amino-acid polypeptide reads, in one-letter code: NAD(P)H-quinone oxidoreductase subunit 1, chloroplastic (362 aa).

8 consecutive transmembrane segments (helical) span residues 29–49 (ILPI…IVWL), 103–123 (IAVI…HFVL), 128–148 (IGVF…LMAG), 164–184 (AAQS…ISLL), 202–222 (FFGW…ISSL), 247–267 (YSGI…LVSS), 303–323 (TMGI…SITI), and 342–362 (FLLP…LVSL).

Belongs to the complex I subunit 1 family. In terms of assembly, NDH is composed of at least 16 different subunits, 5 of which are encoded in the nucleus.

It localises to the plastid. It is found in the chloroplast thylakoid membrane. It carries out the reaction a plastoquinone + NADH + (n+1) H(+)(in) = a plastoquinol + NAD(+) + n H(+)(out). It catalyses the reaction a plastoquinone + NADPH + (n+1) H(+)(in) = a plastoquinol + NADP(+) + n H(+)(out). NDH shuttles electrons from NAD(P)H:plastoquinone, via FMN and iron-sulfur (Fe-S) centers, to quinones in the photosynthetic chain and possibly in a chloroplast respiratory chain. The immediate electron acceptor for the enzyme in this species is believed to be plastoquinone. Couples the redox reaction to proton translocation, and thus conserves the redox energy in a proton gradient. This Hordeum vulgare (Barley) protein is NAD(P)H-quinone oxidoreductase subunit 1, chloroplastic.